The primary structure comprises 406 residues: Pyruvate dehydrogenase E1 component subunit beta-2, chloroplastic (406 aa).

A chloroplast-targeting transit peptide spans 1–44; it reads MSSIIHGAGAATTTLSTFNSVDSKKLFVAPSRTNLSVRSQRYIV. Glu-142 contacts thiamine diphosphate. Residues Val-195, Ala-243, Ile-244, and Asn-248 each coordinate K(+).

Tetramer of 2 alpha and 2 beta subunits. It depends on thiamine diphosphate as a cofactor.

It localises to the plastid. The protein resides in the chloroplast. The enzyme catalyses N(6)-[(R)-lipoyl]-L-lysyl-[protein] + pyruvate + H(+) = N(6)-[(R)-S(8)-acetyldihydrolipoyl]-L-lysyl-[protein] + CO2. Its function is as follows. The pyruvate dehydrogenase complex catalyzes the overall conversion of pyruvate to acetyl-CoA and CO(2). It contains multiple copies of three enzymatic components: pyruvate dehydrogenase (E1), dihydrolipoamide acetyltransferase (E2) and lipoamide dehydrogenase (E3). The chain is Pyruvate dehydrogenase E1 component subunit beta-2, chloroplastic (PDH-E1 BETA) from Arabidopsis thaliana (Mouse-ear cress).